Reading from the N-terminus, the 139-residue chain is Probable cytochrome b5 (139 aa).

The Cytochrome b5 heme-binding domain maps to 2-78 (SAEFTYQDVA…LEPLLVGTLK (77 aa)). The heme site is built by H37 and H61. A helical membrane pass occupies residues 105–125 (GLGIGLYAVLVLGGLAGFAAY).

Belongs to the cytochrome b5 family.

It localises to the endoplasmic reticulum membrane. It is found in the microsome membrane. Its function is as follows. Membrane bound hemoprotein which function as an electron carrier for several membrane bound oxygenases. The chain is Probable cytochrome b5 from Neurospora crassa (strain ATCC 24698 / 74-OR23-1A / CBS 708.71 / DSM 1257 / FGSC 987).